A 149-amino-acid polypeptide reads, in one-letter code: Oligosaccharyltransferase complex subunit ostc (149 aa).

Over 1-32 (MESLYRVPFTVLECPNLKLKKPSWLHMPSAMT) the chain is Cytoplasmic. The helical transmembrane segment at 33-53 (VYAMVVVSYFLITGGIIYDVI) threads the bilayer. Over 54–83 (VEPPSVGSMTDEHGHQRPVAFLAYRVNGQY) the chain is Extracellular. The helical transmembrane segment at 84 to 104 (IMEGLASSFLFTMGGLGFIIL) threads the bilayer. The Cytoplasmic segment spans residues 105–117 (DRSNAPNIPKLNR). The helical transmembrane segment at 118–138 (FLLLFIGFVCVLLSFFMARVF) threads the bilayer. Over 139-149 (MRMKLPGYLMG) the chain is Extracellular.

It belongs to the OSTC family. In terms of assembly, specific component of the STT3A-containing form of the oligosaccharyltransferase (OST) complex.

The protein localises to the membrane. The protein operates within protein modification; protein glycosylation. Functionally, specific component of the STT3A-containing form of the oligosaccharyl transferase (OST) complex that catalyzes the initial transfer of a defined glycan (Glc(3)Man(9)GlcNAc(2) in eukaryotes) from the lipid carrier dolichol-pyrophosphate to an asparagine residue within an Asn-X-Ser/Thr consensus motif in nascent polypeptide chains, the first step in protein N-glycosylation. N-glycosylation occurs cotranslationally and the complex associates with the Sec61 complex at the channel-forming translocon complex that mediates protein translocation across the endoplasmic reticulum (ER). All subunits are required for a maximal enzyme activity. In Xenopus tropicalis (Western clawed frog), this protein is Oligosaccharyltransferase complex subunit ostc.